Here is a 166-residue protein sequence, read N- to C-terminus: Sec-independent protein translocase protein TatB (166 aa).

The chain crosses the membrane as a helical span at residues 2–22 (FDGIGFMELLLIGVLGLVVLG). The interval 69-166 (SKGLSNLSPE…DTRSNPKANG (98 aa)) is disordered. Composition is skewed to polar residues over residues 88–97 (QAAQSVNRPY) and 112–132 (QIYS…SQAN). The span at 133 to 153 (PTATVEASPAPASPATPSEPS) shows a compositional bias: low complexity. Residues 155–166 (GADTRSNPKANG) are compositionally biased toward polar residues.

The protein belongs to the TatB family. In terms of assembly, the Tat system comprises two distinct complexes: a TatABC complex, containing multiple copies of TatA, TatB and TatC subunits, and a separate TatA complex, containing only TatA subunits. Substrates initially bind to the TatABC complex, which probably triggers association of the separate TatA complex to form the active translocon.

It is found in the cell inner membrane. Part of the twin-arginine translocation (Tat) system that transports large folded proteins containing a characteristic twin-arginine motif in their signal peptide across membranes. Together with TatC, TatB is part of a receptor directly interacting with Tat signal peptides. TatB may form an oligomeric binding site that transiently accommodates folded Tat precursor proteins before their translocation. In Shewanella baltica (strain OS155 / ATCC BAA-1091), this protein is Sec-independent protein translocase protein TatB.